A 597-amino-acid chain; its full sequence is Medium/long-chain-fatty-acid--CoA ligase FadD6 (597 aa).

It belongs to the ATP-dependent AMP-binding enzyme family.

It carries out the reaction a medium-chain fatty acid + ATP + CoA = a medium-chain fatty acyl-CoA + AMP + diphosphate. The catalysed reaction is a long-chain fatty acid + ATP + CoA = a long-chain fatty acyl-CoA + AMP + diphosphate. The enzyme catalyses hexanoate + ATP + CoA = hexanoyl-CoA + AMP + diphosphate. It catalyses the reaction octanoate + ATP + CoA = octanoyl-CoA + AMP + diphosphate. It carries out the reaction decanoate + ATP + CoA = decanoyl-CoA + AMP + diphosphate. The catalysed reaction is dodecanoate + ATP + CoA = dodecanoyl-CoA + AMP + diphosphate. The enzyme catalyses tetradecanoate + ATP + CoA = tetradecanoyl-CoA + AMP + diphosphate. It catalyses the reaction hexadecanoate + ATP + CoA = hexadecanoyl-CoA + AMP + diphosphate. It carries out the reaction octadecanoate + ATP + CoA = octadecanoyl-CoA + AMP + diphosphate. The catalysed reaction is 9-decenoate + ATP + CoA = 9-decenoyl-CoA + AMP + diphosphate. The enzyme catalyses (9Z)-octadecenoate + ATP + CoA = (9Z)-octadecenoyl-CoA + AMP + diphosphate. It catalyses the reaction 2-hydroxyhexadecanoate + ATP + CoA = 2-hydroxyhexadecanoyl-CoA + AMP + diphosphate. It carries out the reaction 3-hydroxytetradecanoate + ATP + CoA = 3-hydroxytetradecanoyl-CoA + AMP + diphosphate. The catalysed reaction is 12-hydroxyoctadecanoate + ATP + CoA = 12-hydroxyoctadecanoyl-CoA + AMP + diphosphate. The enzyme catalyses 15-hydroxypentadecanoate + ATP + CoA = 15-hydroxypentadecanoyl-CoA + AMP + diphosphate. It catalyses the reaction 16-hydroxyhexadecanoate + ATP + CoA = 16-hydroxyhexadecanoyl-CoA + AMP + diphosphate. It carries out the reaction 2-methylhexadecanoate + ATP + CoA = 2-methylhexadecanoyl-CoA + AMP + diphosphate. The catalysed reaction is 3-methylundecanoate + ATP + CoA = 3-methylundecanoyl-CoA + AMP + diphosphate. The enzyme catalyses 12-methyltridecanoate + ATP + CoA = 12-methyltridecanoyl-CoA + AMP + diphosphate. It catalyses the reaction 12-methyloctadecanoate + ATP + CoA = 12-methyloctadecanoyl-CoA + AMP + diphosphate. Its function is as follows. Catalyzes the activation of medium/long-chain fatty acids as acyl-coenzyme A (acyl-CoA). May play a role in the uptake of fatty acids by trapping them metabolically as CoA esters. May also play an important role in the channeling of fatty acids into triacylglycerol (TAG) for use by Mycobacterium during its dormancy. The polypeptide is Medium/long-chain-fatty-acid--CoA ligase FadD6 (Mycobacterium tuberculosis (strain ATCC 25618 / H37Rv)).